The primary structure comprises 177 residues: Nucleoside triphosphate/diphosphate phosphatase (177 aa).

Residue arginine 23 is the Proton donor of the active site. Residues asparagine 87, aspartate 103, aspartate 105, aspartate 107, aspartate 120, and glutamate 123 each coordinate Mg(2+).

Belongs to the Ntdp family. Mg(2+) serves as cofactor.

It carries out the reaction a ribonucleoside 5'-triphosphate + H2O = a ribonucleoside 5'-diphosphate + phosphate + H(+). The enzyme catalyses a ribonucleoside 5'-diphosphate + H2O = a ribonucleoside 5'-phosphate + phosphate + H(+). In terms of biological role, has nucleoside phosphatase activity towards nucleoside triphosphates and nucleoside diphosphates. This chain is Nucleoside triphosphate/diphosphate phosphatase, found in Streptococcus thermophilus (strain CNRZ 1066).